Consider the following 132-residue polypeptide: MAITHSVGDMLTKLRNASRVKHGSVDLKMSNMNKSILNILKKEGYIKDFNFLEKEGITFIRVLLKYDNKRNPVINKIDAISTPGRKIYSSYKNMPRIKNGYGILIISSSQGVITGKEAKDKKIGGELICSVW.

The protein belongs to the universal ribosomal protein uS8 family. As to quaternary structure, part of the 30S ribosomal subunit. Contacts proteins S5 and S12.

Functionally, one of the primary rRNA binding proteins, it binds directly to 16S rRNA central domain where it helps coordinate assembly of the platform of the 30S subunit. This chain is Small ribosomal subunit protein uS8, found in Borreliella afzelii (strain PKo) (Borrelia afzelii).